A 190-amino-acid polypeptide reads, in one-letter code: Xanthine phosphoribosyltransferase (190 aa).

Xanthine is bound by residues leucine 20 and asparagine 27. Residue 128 to 132 coordinates 5-phospho-alpha-D-ribose 1-diphosphate; the sequence is ANGKA. Lysine 156 is a xanthine binding site.

The protein belongs to the purine/pyrimidine phosphoribosyltransferase family. Xpt subfamily. As to quaternary structure, homodimer.

The protein resides in the cytoplasm. The catalysed reaction is XMP + diphosphate = xanthine + 5-phospho-alpha-D-ribose 1-diphosphate. Its pathway is purine metabolism; XMP biosynthesis via salvage pathway; XMP from xanthine: step 1/1. Converts the preformed base xanthine, a product of nucleic acid breakdown, to xanthosine 5'-monophosphate (XMP), so it can be reused for RNA or DNA synthesis. This Stutzerimonas stutzeri (strain A1501) (Pseudomonas stutzeri) protein is Xanthine phosphoribosyltransferase.